The chain runs to 542 residues: Signal peptide peptidase-like 5 (542 aa).

The N-terminal stretch at 1–23 (MAAATAAVFALLMASALAGAAAG) is a signal peptide. Topologically, residues 24–192 (GDIVHHDDEA…PDRPVVDTAE (169 aa)) are lumenal. 2 N-linked (GlcNAc...) asparagine glycosylation sites follow: asparagine 79 and asparagine 145. A PA domain is found at 92–167 (CTSPKEKVSG…LPRDAGFALH (76 aa)). A helical membrane pass occupies residues 193 to 213 (VFLWLMAVGTVLCASYWSAWS). The Cytoplasmic segment spans residues 214 to 245 (AREALCEQEKLLKDGREVLLNVENGSSSGMID). The chain crosses the membrane as a helical span at residues 246 to 266 (INVASAIMFVVVASCFLIMLY). Over 267–275 (KMMSSWFVE) the chain is Lumenal. The helical transmembrane segment at 276 to 296 (LLVVIFCVGGVEGLQTCLVAL) threads the bilayer. Topologically, residues 297-316 (LSRWFRAASESFFKVPFFGA) are cytoplasmic. The chain crosses the membrane as a helical span at residues 317–337 (VSYLTLAVSPFCIVFAVLWAV). Topologically, residues 338 to 342 (HRHFT) are lumenal. A helical membrane pass occupies residues 343-363 (YAWIGQDILGIALIITVIQIV). Topologically, residues 364-367 (RVPN) are cytoplasmic. A helical membrane pass occupies residues 368 to 388 (LKVGSVLLSCAFFYDIFWVFV). Aspartate 382 is an active-site residue. The Lumenal segment spans residues 389–426 (SKRWFHESVMIVVARGDKTDEDGVPMLLKIPRMFDPWG). The helical transmembrane segment at 427–447 (GYSIIGFGDILLPGLLVAFAL) threads the bilayer. The active site involves aspartate 435. Residues 448–459 (RYDWAAKKSLQT) lie on the Cytoplasmic side of the membrane. A helical transmembrane segment spans residues 460-480 (GYFLWSMVAYGSGLLITYVAL). Residues 481-486 (NLMDGH) are Lumenal-facing. Residues 487–507 (GQPALLYIVPFTLGALISLGW) traverse the membrane as a helical segment. Positions 489–491 (PAL) match the PAL motif. Over 508-542 (KRGELWNLWSKGEPERVCPHHMHMQPQPKTPPLVQ) the chain is Cytoplasmic.

This sequence belongs to the peptidase A22B family. Glycosylated.

The protein resides in the endosome membrane. Its function is as follows. Intramembrane-cleaving aspartic protease (I-CLiP) that cleaves type II membrane signal peptides in the hydrophobic plane of the membrane. This is Signal peptide peptidase-like 5 (SPPL5) from Oryza sativa subsp. japonica (Rice).